The sequence spans 230 residues: MNQPKAVILLSGGLDSATTAAIALASGYEAIALSLFYGQRHHKEIEAAQKIVQVLGIKEHYSLEVNLSQWGGSALTDQSIEVPKAGLNPHLIPITYVPGRNTVFIAIALSLAEAKGAQAIYLGINAIDYSGYPDCRPEYLEAFQKLANLSSKIGVEGKTIQLIAPLVKDSKVDIVRRAVRLGVPIADTWSCYQGEDEPCGLCDSCRIRDRALIEAGYPELATEIGRKLSH.

Position 10–20 (10–20 (LSGGLDSATTA)) interacts with ATP. Residues cysteine 191, cysteine 199, cysteine 202, and cysteine 205 each contribute to the Zn(2+) site.

It belongs to the QueC family. Zn(2+) is required as a cofactor.

It carries out the reaction 7-carboxy-7-deazaguanine + NH4(+) + ATP = 7-cyano-7-deazaguanine + ADP + phosphate + H2O + H(+). It participates in purine metabolism; 7-cyano-7-deazaguanine biosynthesis. Catalyzes the ATP-dependent conversion of 7-carboxy-7-deazaguanine (CDG) to 7-cyano-7-deazaguanine (preQ(0)). The chain is 7-cyano-7-deazaguanine synthase from Gloeothece citriformis (strain PCC 7424) (Cyanothece sp. (strain PCC 7424)).